The chain runs to 455 residues: MAADSQDIYRNLSADDYEAAPIVVDSVCPVCEEDGETRIMCTSIPYYRAVILMSFECPHCGHKNNEIQSGEAVQEHGTLIVLRVQKPEDLRRQLVKSEYASIEVPELQLEIPHKSQPGEVTTVEGVLERVHRGLSQDQEKRRLLDPEGASQIDAYLQKITSCMELGETWTLRLRDPTGNCYIQNPDVRHVDPRCIISHYHRNLDERKLLALADDNEEEEEVEPSAAAPEFKSYEDAKQEVLHFATDCPNCHGPTEVKMKPTDIPFFQTVIIMSLACDRCGYKSNEVKSGGAIRDQGCRMSVKLEKDLDLARDVLKTDTCALSIPEIDLEVGGNALCGRFTTIEGLLTATKEQLDAQSSFFMGDSAQTGEKSAVTTFLEKLDDIIALRLPATIILDDPTGCSYVQSLTAPMDDPRLTKEFYTRTYEQNDELGINDMKVENYGELDALAEEDEPHEA.

2 C4-type zinc fingers span residues 28–60 (CPVCEEDGETRIMCTSIPYYRAVILMSFECPHC) and 247–279 (CPNCHGPTEVKMKPTDIPFFQTVIIMSLACDRC).

This sequence belongs to the ZPR1 family.

The protein localises to the nucleus. This chain is Zinc finger protein ZPR1 homolog, found in Caenorhabditis elegans.